We begin with the raw amino-acid sequence, 213 residues long: Ribonuclease Oy (213 aa).

H35 is an active-site residue. C51 and C96 are disulfide-bonded. Residue N52 is glycosylated (N-linked (GlcNAc...) asparagine). Residues E89 and H93 contribute to the active site. N-linked (GlcNAc...) asparagine glycosylation is found at N121 and N142. Intrachain disulfides connect C160-C198 and C178-C188.

It belongs to the RNase T2 family.

Its subcellular location is the secreted. In terms of biological role, releases mononucleotides from RNA in the order of 3'-GMP, 3'-AMP and 3'-UMP. The protein is Ribonuclease Oy of Magallana gigas (Pacific oyster).